The sequence spans 316 residues: Acetyl-coenzyme A carboxylase carboxyl transferase subunit beta (316 aa).

Positions 39 to 308 (LWHKCSKCGV…TPPMVLWETM (270 aa)) constitute a CoA carboxyltransferase N-terminal domain. Zn(2+) is bound by residues cysteine 43, cysteine 46, cysteine 62, and cysteine 65. Residues 43–65 (CSKCGVLTYTKDLRANQMVCVEC) form a C4-type zinc finger.

This sequence belongs to the AccD/PCCB family. As to quaternary structure, acetyl-CoA carboxylase is a heterohexamer composed of biotin carboxyl carrier protein (AccB), biotin carboxylase (AccC) and two subunits each of ACCase subunit alpha (AccA) and ACCase subunit beta (AccD). Requires Zn(2+) as cofactor.

The protein resides in the cytoplasm. It catalyses the reaction N(6)-carboxybiotinyl-L-lysyl-[protein] + acetyl-CoA = N(6)-biotinyl-L-lysyl-[protein] + malonyl-CoA. The protein operates within lipid metabolism; malonyl-CoA biosynthesis; malonyl-CoA from acetyl-CoA: step 1/1. In terms of biological role, component of the acetyl coenzyme A carboxylase (ACC) complex. Biotin carboxylase (BC) catalyzes the carboxylation of biotin on its carrier protein (BCCP) and then the CO(2) group is transferred by the transcarboxylase to acetyl-CoA to form malonyl-CoA. The protein is Acetyl-coenzyme A carboxylase carboxyl transferase subunit beta of Trichormus variabilis (strain ATCC 29413 / PCC 7937) (Anabaena variabilis).